The following is a 655-amino-acid chain: Putative phagocytic receptor 1c (655 aa).

Positions 1-20 (MLNIIVVLLLLFFSNNVIDS) are cleaved as a signal peptide. Over residues 146–173 (SNSKSSEITSPPSSPSSSSSSSSSPSSS) the composition is skewed to low complexity. The interval 146 to 185 (SNSKSSEITSPPSSPSSSSSSSSSPSSSIEEEDDDDTEND) is disordered. Over residues 174-183 (IEEEDDDDTE) the composition is skewed to acidic residues. 9 consecutive transmembrane segments (helical) span residues 300–320 (IDIIMSFIIVLAVSACLAIIL), 359–379 (FSIIIGFGVQIVASLFILMVF), 387–407 (IATPGGMAIASILIFSFTGIF), 428–448 (SVITTTLIPFTILLLMFIGYF), 461–481 (IGTVFFILAMWLLVCVPCSLL), 518–538 (MILGGIIPFVIIFTDLSFFLS), 550–570 (LSFALTFILMIISIVETNMII), 587–607 (LLGPMVTGLYTFIYFIYFGIT), and 619–639 (FMFSLVFSILVSLFCSSIGFL).

Belongs to the nonaspanin (TM9SF) (TC 9.A.2) family.

It is found in the membrane. This chain is Putative phagocytic receptor 1c (phg1c), found in Dictyostelium discoideum (Social amoeba).